Here is a 201-residue protein sequence, read N- to C-terminus: 3-isopropylmalate dehydratase small subunit (201 aa).

This sequence belongs to the LeuD family. LeuD type 1 subfamily. Heterodimer of LeuC and LeuD.

The catalysed reaction is (2R,3S)-3-isopropylmalate = (2S)-2-isopropylmalate. Its pathway is amino-acid biosynthesis; L-leucine biosynthesis; L-leucine from 3-methyl-2-oxobutanoate: step 2/4. Its function is as follows. Catalyzes the isomerization between 2-isopropylmalate and 3-isopropylmalate, via the formation of 2-isopropylmaleate. The sequence is that of 3-isopropylmalate dehydratase small subunit from Dinoroseobacter shibae (strain DSM 16493 / NCIMB 14021 / DFL 12).